The sequence spans 651 residues: UvrABC system protein B (651 aa).

The region spanning 25–178 (RGISCGAKEQ…CQLQERLVEL (154 aa)) is the Helicase ATP-binding domain. 38 to 45 (GVTGSGKT) contributes to the ATP binding site. Positions 91 to 114 (YYDYYQPEAYIPQSDVYIEKDALI) match the Beta-hairpin motif. Positions 427-591 (DGQIHDVMCE…IVPRTIQKPV (165 aa)) constitute a Helicase C-terminal domain. A disordered region spans residues 593–615 (TSLSERVGSSRKKVSRDTNTDPA). One can recognise a UVR domain in the interval 616–651 (NRDIVELQKEMLLCAENLDFERAVEIRNEIKRLTAP).

The protein belongs to the UvrB family. Forms a heterotetramer with UvrA during the search for lesions. Interacts with UvrC in an incision complex.

Its subcellular location is the cytoplasm. Functionally, the UvrABC repair system catalyzes the recognition and processing of DNA lesions. A damage recognition complex composed of 2 UvrA and 2 UvrB subunits scans DNA for abnormalities. Upon binding of the UvrA(2)B(2) complex to a putative damaged site, the DNA wraps around one UvrB monomer. DNA wrap is dependent on ATP binding by UvrB and probably causes local melting of the DNA helix, facilitating insertion of UvrB beta-hairpin between the DNA strands. Then UvrB probes one DNA strand for the presence of a lesion. If a lesion is found the UvrA subunits dissociate and the UvrB-DNA preincision complex is formed. This complex is subsequently bound by UvrC and the second UvrB is released. If no lesion is found, the DNA wraps around the other UvrB subunit that will check the other stand for damage. The polypeptide is UvrABC system protein B (Anaplasma marginale (strain Florida)).